A 494-amino-acid polypeptide reads, in one-letter code: Uric acid degradation bifunctional protein PucL (494 aa).

Residues 1-174 (MFTMDDLNQM…EKGETQMKRT (174 aa)) are OHCU decarboxylase. Histidine 68 (proton donor; for OHCU decarboxylase activity) is an active-site residue. Residues proline 69, 81–85 (SVREQ), and 116–120 (FILAV) contribute to the 5-hydroxy-2-oxo-4-ureido-2,5-dihydro-1H-imidazole-5-carboxylate site. A urate oxidase region spans residues 175–494 (MSYGKGNVFA…AAEKCRSLKA (320 aa)). Lysine 179 (charge relay system; for urate oxidase activity) is an active-site residue. Residue lysine 190 is the Charge relay system of the active site. Residue threonine 239 is the Charge relay system; for urate oxidase activity of the active site. Urate contacts are provided by threonine 239, aspartate 240, phenylalanine 349, arginine 366, isoleucine 414, glutamine 415, and asparagine 441.

It in the N-terminal section; belongs to the OHCU decarboxylase family. In the C-terminal section; belongs to the uricase family.

It catalyses the reaction 5-hydroxy-2-oxo-4-ureido-2,5-dihydro-1H-imidazole-5-carboxylate + H(+) = (S)-allantoin + CO2. It carries out the reaction urate + O2 + H2O = 5-hydroxyisourate + H2O2. The protein operates within purine metabolism; urate degradation; (S)-allantoin from urate: step 1/3. It participates in purine metabolism; urate degradation; (S)-allantoin from urate: step 3/3. In terms of biological role, catalyzes two steps in the degradation of uric acid, i.e. the oxidation of uric acid to 5-hydroxyisourate (HIU) and the stereoselective decarboxylation of 2-oxo-4-hydroxy-4-carboxy-5-ureidoimidazoline (OHCU) to (S)-allantoin. This is Uric acid degradation bifunctional protein PucL (pucL) from Bacillus subtilis (strain 168).